A 117-amino-acid chain; its full sequence is Large ribosomal subunit protein uL18 (117 aa).

The protein belongs to the universal ribosomal protein uL18 family. In terms of assembly, part of the 50S ribosomal subunit; part of the 5S rRNA/L5/L18/L25 subcomplex. Contacts the 5S and 23S rRNAs.

Functionally, this is one of the proteins that bind and probably mediate the attachment of the 5S RNA into the large ribosomal subunit, where it forms part of the central protuberance. This chain is Large ribosomal subunit protein uL18, found in Yersinia pseudotuberculosis serotype O:1b (strain IP 31758).